The primary structure comprises 140 residues: Oleosin Cor a 13 (140 aa).

2 consecutive transmembrane segments (helical) span residues 31–51 (GSLL…LTLA) and 75–95 (GFLA…WIYR).

Belongs to the oleosin family. In terms of tissue distribution, expressed in seeds.

It localises to the lipid droplet. Its subcellular location is the membrane. Its function is as follows. May have a structural role to stabilize the lipid body during desiccation of the seed by preventing coalescence of the oil. Probably interacts with both lipid and phospholipid moieties of lipid bodies. May also provide recognition signals for specific lipase anchorage in lipolysis during seedling growth. In Corylus avellana (European hazel), this protein is Oleosin Cor a 13.